A 606-amino-acid chain; its full sequence is Glutamine--fructose-6-phosphate aminotransferase [isomerizing] (606 aa).

Cys-2 acts as the Nucleophile; for GATase activity in catalysis. In terms of domain architecture, Glutamine amidotransferase type-2 spans 2-217 (CGIVGMVGEN…DGDVMVLRKD (216 aa)). SIS domains are found at residues 284-423 (YEEL…INGY) and 455-596 (LSEK…PDKP). Lys-601 (for Fru-6P isomerization activity) is an active-site residue.

As to quaternary structure, homodimer.

It localises to the cytoplasm. The catalysed reaction is D-fructose 6-phosphate + L-glutamine = D-glucosamine 6-phosphate + L-glutamate. In terms of biological role, catalyzes the first step in hexosamine metabolism, converting fructose-6P into glucosamine-6P using glutamine as a nitrogen source. The protein is Glutamine--fructose-6-phosphate aminotransferase [isomerizing] of Thermotoga maritima (strain ATCC 43589 / DSM 3109 / JCM 10099 / NBRC 100826 / MSB8).